The following is a 379-amino-acid chain: Orotidine 5'-phosphate decarboxylase (379 aa).

Residues Asp-42, 64 to 66 (KTH), and 99 to 108 (DRKFGDIGHT) contribute to the substrate site. Lys-101 acts as the Proton donor in catalysis. Positions 165 to 198 (PTMDQFDDAEDAKDDEPATVNDNGSNMMEKPIYA) are disordered. The segment covering 169 to 178 (QFDDAEDAKD) has biased composition (acidic residues). Residues Tyr-331 and Arg-350 each coordinate substrate.

The protein belongs to the OMP decarboxylase family.

It catalyses the reaction orotidine 5'-phosphate + H(+) = UMP + CO2. Its pathway is pyrimidine metabolism; UMP biosynthesis via de novo pathway; UMP from orotate: step 2/2. This Hypocrea atroviridis (Trichoderma atroviride) protein is Orotidine 5'-phosphate decarboxylase (pyr4).